The chain runs to 605 residues: Pescadillo homolog (605 aa).

Residues 51–484 are sufficient for interaction with ERB1; the sequence is KANKGSTAPT…GEEEESESES (434 aa). Ser288 carries the phosphoserine modification. A coiled-coil region spans residues 294-342; that stretch reads LKSALNADEANTDETEKEEEQEKKQEKEQEKEQNEETELDTFEDNNKNK. The disordered stretch occupies residues 297–342; that stretch reads ALNADEANTDETEKEEEQEKKQEKEQEKEQNEETELDTFEDNNKNK. The segment covering 303–312 has biased composition (acidic residues); it reads ANTDETEKEE. A Phosphothreonine modification is found at Thr308. The segment covering 313–327 has biased composition (basic and acidic residues); sequence EQEKKQEKEQEKEQN. The region spanning 355–449 is the BRCT domain; sequence PVASLFSAFV…ELVPANKYLP (95 aa). The interval 459–605 is disordered; that stretch reads PWGDAIGYDP…AKLNKLDSKK (147 aa). Positions 473 to 510 are enriched in acidic residues; sequence EEGEEEESESESESEDQVEEEDQEVVAGEEDDDDDEEL. Positions 530-605 form a coiled coil; sequence EADKDVNKSK…AKLNKLDSKK (76 aa). Over residues 562–571 the composition is skewed to basic residues; sequence KQKKLYKKMK. A compositionally biased stretch (basic and acidic residues) spans 575–584; the sequence is AKKEEQAENL. The segment covering 585–598 has biased composition (basic residues); sequence KKKKKQIAKQKAKL.

Belongs to the pescadillo family. As to quaternary structure, component of the NOP7 complex, composed of ERB1, NOP7 and YTM1. The complex is held together by ERB1, which interacts with NOP7 via its N-terminal domain and with YTM1 via a high-affinity interaction between the seven-bladed beta-propeller domains of the 2 proteins. The NOP7 complex associates with the 66S pre-ribosome.

It is found in the nucleus. The protein resides in the nucleolus. The protein localises to the nucleoplasm. Its function is as follows. Component of the NOP7 complex, which is required for maturation of the 25S and 5.8S ribosomal RNAs and formation of the 60S ribosome. This chain is Pescadillo homolog, found in Saccharomyces cerevisiae (strain YJM789) (Baker's yeast).